We begin with the raw amino-acid sequence, 1243 residues long: Inositol hexakisphosphate and diphosphoinositol-pentakisphosphate kinase 2 (1243 aa).

At S38 the chain carries Phosphoserine. 53–54 contacts substrate; sequence KK. Residues R134, K187, H194, and R213 each coordinate ATP. Substrate is bound at residue 213 to 214; the sequence is RK. S223 carries the phosphoserine modification. Residues 237 to 240 and 246 to 248 contribute to the ATP site; these read EEFM and DVK. Substrate contacts are provided by K248 and R262. ATP-binding positions include S264, D309, and 321–323; that span reads DVN. 326-329 is a binding site for substrate; it reads SFVK. The polyphosphoinositide-binding domain stretch occupies residues 371–442; it reads PTTSGTMMEL…VLDIARQLLM (72 aa). 2 disordered regions span residues 898 to 941 and 957 to 1016; these read KGCE…RDEV and HIHR…SPVS. A compositionally biased stretch (basic and acidic residues) spans 915–941; that stretch reads ASRENEGRRPFKIDNDDEPHTSKRDEV. A compositionally biased stretch (basic residues) spans 958 to 969; the sequence is IHRKSPLPRSRK. Residues S1006, S1016, S1074, S1091, S1165, S1172, and S1180 each carry the phosphoserine modification. Residues 1185 to 1243 are disordered; it reads TPAKILPTPPATLKSTKASSKPATSGPSSAVVPNTSSRKKNITSKTETHEHKKNTGKKK. Over residues 1195-1209 the composition is skewed to low complexity; it reads ATLKSTKASSKPATS. Residues 1210 to 1220 show a composition bias toward polar residues; the sequence is GPSSAVVPNTS. Phosphoserine occurs at positions 1220 and 1221.

The protein belongs to the histidine acid phosphatase family. VIP1 subfamily.

The protein resides in the cytoplasm. The protein localises to the cytosol. It carries out the reaction 1D-myo-inositol hexakisphosphate + ATP = 1-diphospho-1D-myo-inositol 2,3,4,5,6-pentakisphosphate + ADP. It catalyses the reaction 5-diphospho-1D-myo-inositol 1,2,3,4,6-pentakisphosphate + ATP + H(+) = 1,5-bis(diphospho)-1D-myo-inositol 2,3,4,6-tetrakisphosphate + ADP. Bifunctional inositol kinase that acts in concert with the IP6K kinases IP6K1, IP6K2 and IP6K3 to synthesize the diphosphate group-containing inositol pyrophosphates diphosphoinositol pentakisphosphate, PP-InsP5, and bis-diphosphoinositol tetrakisphosphate, (PP)2-InsP4. PP-InsP5 and (PP)2-InsP4, also respectively called InsP7 and InsP8, regulate a variety of cellular processes, including apoptosis, vesicle trafficking, cytoskeletal dynamics, exocytosis, insulin signaling and neutrophil activation. Phosphorylates inositol hexakisphosphate (InsP6) at position 1 to produce PP-InsP5 which is in turn phosphorylated by IP6Ks to produce (PP)2-InsP4. Alternatively, phosphorylates PP-InsP5 at position 1, produced by IP6Ks from InsP6, to produce (PP)2-InsP4. Required for normal hearing. In Homo sapiens (Human), this protein is Inositol hexakisphosphate and diphosphoinositol-pentakisphosphate kinase 2.